Reading from the N-terminus, the 290-residue chain is Small ribosomal subunit protein uS2 (290 aa).

The tract at residues 269 to 290 (WEAEASGDWAAESAQPNPETKW) is disordered.

It belongs to the universal ribosomal protein uS2 family. In terms of assembly, component of the small ribosomal subunit. Mature ribosomes consist of a small (40S) and a large (60S) subunit. The 40S subunit contains about 33 different proteins and 1 molecule of RNA (18S). The 60S subunit contains about 49 different proteins and 3 molecules of RNA (25S, 5.8S and 5S). Interacts with rps21.

The protein localises to the cytoplasm. Functionally, required for the assembly and/or stability of the 40S ribosomal subunit. Required for the processing of the 20S rRNA-precursor to mature 18S rRNA in a late step of the maturation of 40S ribosomal subunits. This is Small ribosomal subunit protein uS2 (rps0) from Talaromyces marneffei (strain ATCC 18224 / CBS 334.59 / QM 7333) (Penicillium marneffei).